The primary structure comprises 299 residues: Ribosomal RNA small subunit methyltransferase H (299 aa).

S-adenosyl-L-methionine-binding positions include 36 to 38 (GGH), Asp55, Phe82, Asp97, and Gln104.

This sequence belongs to the methyltransferase superfamily. RsmH family.

It is found in the cytoplasm. It carries out the reaction cytidine(1402) in 16S rRNA + S-adenosyl-L-methionine = N(4)-methylcytidine(1402) in 16S rRNA + S-adenosyl-L-homocysteine + H(+). Its function is as follows. Specifically methylates the N4 position of cytidine in position 1402 (C1402) of 16S rRNA. The sequence is that of Ribosomal RNA small subunit methyltransferase H from Synechococcus sp. (strain RCC307).